The chain runs to 284 residues: uncharacterized protein (284 aa).

The first 20 residues, 1 to 20 (MLHNIQSILQFLLFVSSVQA), serve as a signal peptide directing secretion. The 84-residue stretch at 38 to 121 (CFEFKKNYWI…FTVNFFRNIC (84 aa)) folds into the Apple domain. 3 disulfide bridges follow: C38/C121, C63/C89, and C67/C77. N256 carries N-linked (GlcNAc...) asparagine glycosylation. A helical transmembrane segment spans residues 264–284 (SSTGLKFTTGLLIILVVFLFL).

Its subcellular location is the membrane. This is an uncharacterized protein from Caenorhabditis elegans.